Here is a 224-residue protein sequence, read N- to C-terminus: ATP-dependent dethiobiotin synthetase BioD (224 aa).

Mg(2+) is bound at residue Thr-18. Lys-39 is an active-site residue. Ser-43 is a substrate binding site. Mg(2+) contacts are provided by Asp-56 and Glu-117. ATP-binding positions include Asp-56, 117–120 (EGVG), and 177–178 (NE).

It belongs to the dethiobiotin synthetase family. In terms of assembly, homodimer. Mg(2+) is required as a cofactor.

The protein resides in the cytoplasm. The catalysed reaction is (7R,8S)-7,8-diammoniononanoate + CO2 + ATP = (4R,5S)-dethiobiotin + ADP + phosphate + 3 H(+). Its pathway is cofactor biosynthesis; biotin biosynthesis; biotin from 7,8-diaminononanoate: step 1/2. Its function is as follows. Catalyzes a mechanistically unusual reaction, the ATP-dependent insertion of CO2 between the N7 and N8 nitrogen atoms of 7,8-diaminopelargonic acid (DAPA, also called 7,8-diammoniononanoate) to form a ureido ring. The protein is ATP-dependent dethiobiotin synthetase BioD of Xanthomonas oryzae pv. oryzae (strain MAFF 311018).